A 444-amino-acid polypeptide reads, in one-letter code: tRNA-2-methylthio-N(6)-dimethylallyladenosine synthase (444 aa).

An MTTase N-terminal domain is found at 4 to 120 (PTYYTITFGC…LGDLLAQVEA (117 aa)). Positions 13, 49, 83, 155, 159, and 162 each coordinate [4Fe-4S] cluster. One can recognise a Radical SAM core domain in the interval 141-372 (RDSQVTAWIN…RLVAEVAAAR (232 aa)). The 65-residue stretch at 374–438 (ARLLGQVQEV…AFSLTGEAVT (65 aa)) folds into the TRAM domain.

This sequence belongs to the methylthiotransferase family. MiaB subfamily. In terms of assembly, monomer. [4Fe-4S] cluster is required as a cofactor.

It is found in the cytoplasm. It catalyses the reaction N(6)-dimethylallyladenosine(37) in tRNA + (sulfur carrier)-SH + AH2 + 2 S-adenosyl-L-methionine = 2-methylsulfanyl-N(6)-dimethylallyladenosine(37) in tRNA + (sulfur carrier)-H + 5'-deoxyadenosine + L-methionine + A + S-adenosyl-L-homocysteine + 2 H(+). Its function is as follows. Catalyzes the methylthiolation of N6-(dimethylallyl)adenosine (i(6)A), leading to the formation of 2-methylthio-N6-(dimethylallyl)adenosine (ms(2)i(6)A) at position 37 in tRNAs that read codons beginning with uridine. The polypeptide is tRNA-2-methylthio-N(6)-dimethylallyladenosine synthase (Synechococcus sp. (strain JA-2-3B'a(2-13)) (Cyanobacteria bacterium Yellowstone B-Prime)).